We begin with the raw amino-acid sequence, 395 residues long: HCLS1-binding protein 3 (395 aa).

At M1 the chain carries N-acetylmethionine. S3 bears the Phosphoserine mark. The 124-residue stretch at 19–142 (GLDLSVPQHQ…EFLGTRAPGA (124 aa)) folds into the PX domain. Disordered regions lie at residues 143–310 (TGLA…KELF) and 322–374 (LGSE…AMDE). Over residues 162-174 (DSDEAFDFFEQQD) the composition is skewed to acidic residues. Position 191 is a phosphoserine (S191). Positions 194–206 (GEEEEEEEEEEVL) are enriched in acidic residues. Composition is skewed to basic and acidic residues over residues 249–260 (SDKKVSETRRPL) and 299–310 (RPEHGDASKELF). S254 carries the post-translational modification Phosphoserine. Over residues 329-339 (KPQTKPKPLVP) the composition is skewed to pro residues. K341 bears the N6-acetyllysine mark.

As to quaternary structure, binds HCLS1. Interacts with the SH3 domain of HCLS1 in vitro. As to expression, ubiquitously expressed.

Its function is as follows. May be a modulator of IL-2 signaling. In Mus musculus (Mouse), this protein is HCLS1-binding protein 3 (Hs1bp3).